Here is a 345-residue protein sequence, read N- to C-terminus: GTP 3',8-cyclase (345 aa).

Residues 10–236 (SHGRPLGVLR…QCVSSHWPLD (227 aa)) enclose the Radical SAM core domain. Arg19 lines the GTP pocket. 2 residues coordinate [4Fe-4S] cluster: Cys26 and Cys30. S-adenosyl-L-methionine is bound at residue Tyr32. Cys33 contacts [4Fe-4S] cluster. Residue Arg65 coordinates GTP. Gly69 is a binding site for S-adenosyl-L-methionine. Thr98 is a binding site for GTP. Residue Ser123 coordinates S-adenosyl-L-methionine. Position 172 (Lys172) interacts with GTP. Met206 provides a ligand contact to S-adenosyl-L-methionine. [4Fe-4S] cluster-binding residues include Cys269 and Cys272. 274–276 (RIR) is a binding site for GTP. Cys286 contacts [4Fe-4S] cluster.

Belongs to the radical SAM superfamily. MoaA family. In terms of assembly, monomer and homodimer. [4Fe-4S] cluster serves as cofactor.

The catalysed reaction is GTP + AH2 + S-adenosyl-L-methionine = (8S)-3',8-cyclo-7,8-dihydroguanosine 5'-triphosphate + 5'-deoxyadenosine + L-methionine + A + H(+). It functions in the pathway cofactor biosynthesis; molybdopterin biosynthesis. Its function is as follows. Catalyzes the cyclization of GTP to (8S)-3',8-cyclo-7,8-dihydroguanosine 5'-triphosphate. The protein is GTP 3',8-cyclase of Synechococcus sp. (strain CC9902).